Consider the following 463-residue polypeptide: Glutamate--tRNA ligase 2 (463 aa).

The short motif at 10-20 is the 'HIGH' region element; the sequence is PSPTGYLHIGG. Residues 238–242 carry the 'KMSKS' region motif; it reads KLSKR. Residue K241 participates in ATP binding.

This sequence belongs to the class-I aminoacyl-tRNA synthetase family. Glutamate--tRNA ligase type 1 subfamily. In terms of assembly, monomer.

The protein localises to the cytoplasm. It carries out the reaction tRNA(Glu) + L-glutamate + ATP = L-glutamyl-tRNA(Glu) + AMP + diphosphate. Its function is as follows. Catalyzes the attachment of glutamate to tRNA(Glu) in a two-step reaction: glutamate is first activated by ATP to form Glu-AMP and then transferred to the acceptor end of tRNA(Glu). This is Glutamate--tRNA ligase 2 from Helicobacter acinonychis (strain Sheeba).